The chain runs to 465 residues: UDP-N-acetylmuramoylalanine--D-glutamate ligase (465 aa).

An ATP-binding site is contributed by 127–133; it reads GSNGKST.

It belongs to the MurCDEF family.

It localises to the cytoplasm. It catalyses the reaction UDP-N-acetyl-alpha-D-muramoyl-L-alanine + D-glutamate + ATP = UDP-N-acetyl-alpha-D-muramoyl-L-alanyl-D-glutamate + ADP + phosphate + H(+). It participates in cell wall biogenesis; peptidoglycan biosynthesis. In terms of biological role, cell wall formation. Catalyzes the addition of glutamate to the nucleotide precursor UDP-N-acetylmuramoyl-L-alanine (UMA). The chain is UDP-N-acetylmuramoylalanine--D-glutamate ligase from Cereibacter sphaeroides (strain ATCC 17029 / ATH 2.4.9) (Rhodobacter sphaeroides).